Here is a 216-residue protein sequence, read N- to C-terminus: Redox-sensing transcriptional repressor Rex (216 aa).

Positions 20-59 (QYYRLFKSLVEENVTRTNSQLISEKIGVDAATIRRDFSLF) form a DNA-binding region, H-T-H motif. An NAD(+)-binding site is contributed by 94 to 99 (GVGNLG).

This sequence belongs to the transcriptional regulatory Rex family. As to quaternary structure, homodimer.

It localises to the cytoplasm. Its function is as follows. Modulates transcription in response to changes in cellular NADH/NAD(+) redox state. The polypeptide is Redox-sensing transcriptional repressor Rex (Lactococcus lactis subsp. cremoris (strain SK11)).